We begin with the raw amino-acid sequence, 346 residues long: Porphobilinogen deaminase (346 aa).

At Cys242 the chain carries S-(dipyrrolylmethanemethyl)cysteine. The tract at residues 317–346 (ATEPGARSGTGAVRPPETDLSNPSPMENPQ) is disordered. Residues 335 to 346 (DLSNPSPMENPQ) show a composition bias toward polar residues.

The protein belongs to the HMBS family. In terms of assembly, monomer. The cofactor is dipyrromethane.

It carries out the reaction 4 porphobilinogen + H2O = hydroxymethylbilane + 4 NH4(+). It participates in porphyrin-containing compound metabolism; protoporphyrin-IX biosynthesis; coproporphyrinogen-III from 5-aminolevulinate: step 2/4. In terms of biological role, tetrapolymerization of the monopyrrole PBG into the hydroxymethylbilane pre-uroporphyrinogen in several discrete steps. This Nocardia farcinica (strain IFM 10152) protein is Porphobilinogen deaminase.